The sequence spans 144 residues: 3-hydroxyacyl-[acyl-carrier-protein] dehydratase FabZ (144 aa).

Histidine 48 is an active-site residue.

This sequence belongs to the thioester dehydratase family. FabZ subfamily.

It is found in the cytoplasm. The enzyme catalyses a (3R)-hydroxyacyl-[ACP] = a (2E)-enoyl-[ACP] + H2O. In terms of biological role, involved in unsaturated fatty acids biosynthesis. Catalyzes the dehydration of short chain beta-hydroxyacyl-ACPs and long chain saturated and unsaturated beta-hydroxyacyl-ACPs. This is 3-hydroxyacyl-[acyl-carrier-protein] dehydratase FabZ from Bacillus anthracis (strain A0248).